Reading from the N-terminus, the 326-residue chain is DNA-directed RNA polymerase subunit alpha (326 aa).

An alpha N-terminal domain (alpha-NTD) region spans residues 1 to 232; that stretch reads MQGSARDFLK…EQLSSFVELE (232 aa). An alpha C-terminal domain (alpha-CTD) region spans residues 246 to 326; the sequence is FDPQLLAAVD…NWPPVDLMSE (81 aa).

It belongs to the RNA polymerase alpha chain family. As to quaternary structure, homodimer. The RNAP catalytic core consists of 2 alpha, 1 beta, 1 beta' and 1 omega subunit. When a sigma factor is associated with the core the holoenzyme is formed, which can initiate transcription.

It carries out the reaction RNA(n) + a ribonucleoside 5'-triphosphate = RNA(n+1) + diphosphate. Functionally, DNA-dependent RNA polymerase catalyzes the transcription of DNA into RNA using the four ribonucleoside triphosphates as substrates. This chain is DNA-directed RNA polymerase subunit alpha, found in Vesicomyosocius okutanii subsp. Calyptogena okutanii (strain HA).